We begin with the raw amino-acid sequence, 130 residues long: Small ribosomal subunit protein uS9 (130 aa).

The segment at 98 to 130 (LKRAGLLTRDPRMKERKKPGLKKARRSPQFSKR) is disordered. A compositionally biased stretch (basic residues) spans 111 to 130 (KERKKPGLKKARRSPQFSKR).

It belongs to the universal ribosomal protein uS9 family.

This Staphylococcus epidermidis (strain ATCC 35984 / DSM 28319 / BCRC 17069 / CCUG 31568 / BM 3577 / RP62A) protein is Small ribosomal subunit protein uS9.